We begin with the raw amino-acid sequence, 380 residues long: Glucose-1-phosphate adenylyltransferase (380 aa).

Residues glycine 164, 179–180 (EK), and serine 190 contribute to the alpha-D-glucose 1-phosphate site.

The protein belongs to the bacterial/plant glucose-1-phosphate adenylyltransferase family. Homotetramer.

The catalysed reaction is alpha-D-glucose 1-phosphate + ATP + H(+) = ADP-alpha-D-glucose + diphosphate. The protein operates within glycan biosynthesis; glycogen biosynthesis. Involved in the biosynthesis of ADP-glucose, a building block required for the elongation reactions to produce glycogen. Catalyzes the reaction between ATP and alpha-D-glucose 1-phosphate (G1P) to produce pyrophosphate and ADP-Glc. The sequence is that of Glucose-1-phosphate adenylyltransferase from Streptococcus pneumoniae serotype 2 (strain D39 / NCTC 7466).